Here is a 248-residue protein sequence, read N- to C-terminus: Ribonuclease PH (248 aa).

Residues Arg86 and 124 to 126 (GTR) contribute to the phosphate site.

It belongs to the RNase PH family. In terms of assembly, homohexameric ring arranged as a trimer of dimers.

The catalysed reaction is tRNA(n+1) + phosphate = tRNA(n) + a ribonucleoside 5'-diphosphate. Functionally, phosphorolytic 3'-5' exoribonuclease that plays an important role in tRNA 3'-end maturation. Removes nucleotide residues following the 3'-CCA terminus of tRNAs; can also add nucleotides to the ends of RNA molecules by using nucleoside diphosphates as substrates, but this may not be physiologically important. Probably plays a role in initiation of 16S rRNA degradation (leading to ribosome degradation) during starvation. This chain is Ribonuclease PH, found in Clostridium perfringens (strain 13 / Type A).